A 651-amino-acid polypeptide reads, in one-letter code: Acetyl-coenzyme A synthetase (651 aa).

Residues 189 to 192, Thr-311, and Asn-335 contribute to the CoA site; that span reads RGGK. ATP is bound by residues 387-389, 411-416, Asp-500, and Arg-515; these read GEP and DTWWQT. Position 523 (Ser-523) interacts with CoA. ATP is bound at residue Arg-526. Val-537, His-539, and Val-542 together coordinate Mg(2+). Arg-584 provides a ligand contact to CoA. Residue Lys-609 is modified to N6-acetyllysine.

It belongs to the ATP-dependent AMP-binding enzyme family. Requires Mg(2+) as cofactor. In terms of processing, acetylated. Deacetylation by the SIR2-homolog deacetylase activates the enzyme.

The catalysed reaction is acetate + ATP + CoA = acetyl-CoA + AMP + diphosphate. Its function is as follows. Catalyzes the conversion of acetate into acetyl-CoA (AcCoA), an essential intermediate at the junction of anabolic and catabolic pathways. AcsA undergoes a two-step reaction. In the first half reaction, AcsA combines acetate with ATP to form acetyl-adenylate (AcAMP) intermediate. In the second half reaction, it can then transfer the acetyl group from AcAMP to the sulfhydryl group of CoA, forming the product AcCoA. In Rhizobium etli (strain CIAT 652), this protein is Acetyl-coenzyme A synthetase.